Reading from the N-terminus, the 216-residue chain is Ribonuclease HII (216 aa).

The RNase H type-2 domain occupies 33 to 216; that stretch reads WPVAGADEAG…RMSFRPFRQL (184 aa). 3 residues coordinate a divalent metal cation: D39, E40, and D130.

This sequence belongs to the RNase HII family. The cofactor is Mn(2+). It depends on Mg(2+) as a cofactor.

The protein localises to the cytoplasm. It carries out the reaction Endonucleolytic cleavage to 5'-phosphomonoester.. Endonuclease that specifically degrades the RNA of RNA-DNA hybrids. This chain is Ribonuclease HII, found in Sinorhizobium medicae (strain WSM419) (Ensifer medicae).